A 101-amino-acid chain; its full sequence is Interleukin-8 (101 aa).

The first 22 residues, 1 to 22 (MNSKLAVALLATFLLSLTLCEA), serve as a signal peptide directing secretion. Arginine 27 is subject to Citrulline. Intrachain disulfides connect cysteine 34–cysteine 61 and cysteine 36–cysteine 77.

This sequence belongs to the intercrine alpha (chemokine CxC) family. Homodimer. Interacts with TNFAIP6 (via Link domain); this interaction interferes with chemokine binding to glycosaminoglycans. In terms of processing, citrullination at Arg-27 prevents proteolysis, and dampens tissue inflammation, it also enhances leukocytosis, possibly through impaired chemokine clearance from the blood circulation.

The protein resides in the secreted. Functionally, chemotactic factor that mediates inflammatory response by attracting neutrophils, basophils, and T-cells to clear pathogens and protect the host from infection. Also plays an important role in neutrophil activation. Released in response to an inflammatory stimulus, exerts its effect by binding to the G-protein-coupled receptors CXCR1 and CXCR2, primarily found in neutrophils, monocytes and endothelial cells. G-protein heterotrimer (alpha, beta, gamma subunits) constitutively binds to CXCR1/CXCR2 receptor and activation by IL8 leads to beta and gamma subunits release from Galpha (GNAI2 in neutrophils) and activation of several downstream signaling pathways including PI3K and MAPK pathways. The chain is Interleukin-8 (CXCL8) from Oryctolagus cuniculus (Rabbit).